Consider the following 229-residue polypeptide: 3-dehydroquinate dehydratase (229 aa).

Residues E33 to R35 and R65 each bind 3-dehydroquinate. H121 (proton donor/acceptor) is an active-site residue. Catalysis depends on K146, which acts as the Schiff-base intermediate with substrate. Residues R188, S207, and Q211 each contribute to the 3-dehydroquinate site.

Belongs to the type-I 3-dehydroquinase family. In terms of assembly, homodimer.

The catalysed reaction is 3-dehydroquinate = 3-dehydroshikimate + H2O. The protein operates within metabolic intermediate biosynthesis; chorismate biosynthesis; chorismate from D-erythrose 4-phosphate and phosphoenolpyruvate: step 3/7. Functionally, involved in the third step of the chorismate pathway, which leads to the biosynthesis of aromatic amino acids. Catalyzes the cis-dehydration of 3-dehydroquinate (DHQ) and introduces the first double bond of the aromatic ring to yield 3-dehydroshikimate. The polypeptide is 3-dehydroquinate dehydratase (Lactococcus lactis subsp. cremoris (strain SK11)).